The chain runs to 379 residues: uncharacterized protein (379 aa).

This is an uncharacterized protein from Shouchella clausii (Alkalihalobacillus clausii).